The following is a 499-amino-acid chain: 6-hydroxynicotinate reductase (499 aa).

2 consecutive 4Fe-4S ferredoxin-type domains span residues 1 to 29 (MFKI…YEKK) and 31 to 61 (KGAI…NDAP). [4Fe-4S] cluster is bound by residues Cys9, Cys12, Cys15, Cys19, Cys41, Cys44, Cys47, and Cys51.

Homotetramer. It depends on an oxidized flavin as a cofactor. Requires [2Fe-2S] cluster as cofactor. [4Fe-4S] cluster is required as a cofactor.

It carries out the reaction 1,4,5,6-tetrahydro-6-oxonicotinate + oxidized 2[4Fe-4S]-[ferredoxin] = 6-hydroxynicotinate + reduced 2[4Fe-4S]-[ferredoxin] + 2 H(+). It participates in cofactor degradation; nicotinate degradation; propanoate and pyruvate from 6-hydroxynicotinate: step 1/8. Its function is as follows. Catalyzes the reversible reduction of 6-hydroxynicotinate to 6-oxo-1,4,5,6-tetrahydronicotinate. The polypeptide is 6-hydroxynicotinate reductase (Eubacterium barkeri (Clostridium barkeri)).